Reading from the N-terminus, the 127-residue chain is Fluoride-specific ion channel FluC (127 aa).

The next 4 helical transmembrane spans lie at 4 to 24 (LLLA…MLSM), 35 to 55 (LGTL…FAWF), 71 to 91 (TGFC…VFLL), and 103 to 123 (VLVN…IFSA). Na(+) is bound by residues glycine 75 and threonine 78.

This sequence belongs to the fluoride channel Fluc/FEX (TC 1.A.43) family.

Its subcellular location is the cell inner membrane. It carries out the reaction fluoride(in) = fluoride(out). Na(+) is not transported, but it plays an essential structural role and its presence is essential for fluoride channel function. Its function is as follows. Fluoride-specific ion channel. Important for reducing fluoride concentration in the cell, thus reducing its toxicity. The sequence is that of Fluoride-specific ion channel FluC from Escherichia fergusonii (strain ATCC 35469 / DSM 13698 / CCUG 18766 / IAM 14443 / JCM 21226 / LMG 7866 / NBRC 102419 / NCTC 12128 / CDC 0568-73).